A 417-amino-acid chain; its full sequence is uncharacterized protein (417 aa).

The next 10 helical transmembrane spans lie at 21–41, 50–70, 88–108, 166–186, 217–237, 255–275, 283–303, 308–328, 351–371, and 373–393; these read ISSLGDWLHILAVLTLAAFQL, LLMMSFALPVIVLGPVSGLLA, LTVISCVYVSELWQLYVLLSV, SVFYINAGAFFLSAVILFFLP, MPLLLTGLLTACVVLFVLQIG, LAGWCMAVSGAGMLLTAAITG, LLYFSAGTLLLGLATGGAPFL, IAGITLFIFAFFIMGAAFGLV, AIQSATTLASILGMAGGGVLA, and WIGVSLAFLVCGCLLIMIGLI.

The protein belongs to the major facilitator superfamily. TCR/Tet family.

The protein localises to the cell membrane. This is an uncharacterized protein from Bacillus subtilis (strain 168).